The primary structure comprises 394 residues: Elongation factor Tu 1 (394 aa).

The 195-residue stretch at K10–E204 folds into the tr-type G domain. Residues G19 to T26 form a G1 region. GTP is bound at residue G19–T26. T26 lines the Mg(2+) pocket. The tract at residues G60–S64 is G2. A G3 region spans residues D81 to G84. GTP is bound by residues D81 to H85 and N136 to D139. Residues N136–D139 form a G4 region. A G5 region spans residues S174–L176.

It belongs to the TRAFAC class translation factor GTPase superfamily. Classic translation factor GTPase family. EF-Tu/EF-1A subfamily. In terms of assembly, monomer.

The protein resides in the cytoplasm. It catalyses the reaction GTP + H2O = GDP + phosphate + H(+). Functionally, GTP hydrolase that promotes the GTP-dependent binding of aminoacyl-tRNA to the A-site of ribosomes during protein biosynthesis. The polypeptide is Elongation factor Tu 1 (Photorhabdus laumondii subsp. laumondii (strain DSM 15139 / CIP 105565 / TT01) (Photorhabdus luminescens subsp. laumondii)).